Reading from the N-terminus, the 333-residue chain is Anthranilate phosphoribosyltransferase (333 aa).

Residues glycine 80, glycine 83–aspartate 84, threonine 88, asparagine 90–threonine 93, lysine 108–glycine 116, and serine 120 each bind 5-phospho-alpha-D-ribose 1-diphosphate. Position 80 (glycine 80) interacts with anthranilate. Serine 92 is a Mg(2+) binding site. Asparagine 111 is a binding site for anthranilate. An anthranilate-binding site is contributed by arginine 166. Positions 224 and 225 each coordinate Mg(2+).

Belongs to the anthranilate phosphoribosyltransferase family. Homodimer. Mg(2+) is required as a cofactor.

It catalyses the reaction N-(5-phospho-beta-D-ribosyl)anthranilate + diphosphate = 5-phospho-alpha-D-ribose 1-diphosphate + anthranilate. It participates in amino-acid biosynthesis; L-tryptophan biosynthesis; L-tryptophan from chorismate: step 2/5. Catalyzes the transfer of the phosphoribosyl group of 5-phosphorylribose-1-pyrophosphate (PRPP) to anthranilate to yield N-(5'-phosphoribosyl)-anthranilate (PRA). This Pyrobaculum aerophilum (strain ATCC 51768 / DSM 7523 / JCM 9630 / CIP 104966 / NBRC 100827 / IM2) protein is Anthranilate phosphoribosyltransferase.